The following is a 91-amino-acid chain: Ixochymostatin (91 aa).

Residues 1-20 form the signal peptide; the sequence is MKTYVLQALLLTLAVAVVRA. Disulfide bonds link C34–C70, C43–C66, C48–C62, C53–C90, and C72–C84. Residues 34–90 enclose the TIL domain; sequence CAEGETWKECVGSSCAELTCEHPEPSLGCTYDCNYGCYCAPDFFRNANKECVKKDKC.

It belongs to the serine protease inhibitor-like (TIL domain-containing) family. In terms of tissue distribution, salivary gland. Midgut.

The protein resides in the secreted. Its function is as follows. Tight-binding competitive inhibitor of chymotrypsin-like proteases; inhibits host chymase, cathepsin G (CTSG) and chymotrypsin. Inhibits chymase-mediated generation of vasoconstrictor peptides: angiotensin II and endothelin I. Reduces chymase-mediated vascular permeability and vascular endothelial-cadherin degradation. This chain is Ixochymostatin, found in Ixodes scapularis (Black-legged tick).